A 156-amino-acid polypeptide reads, in one-letter code: Arginine repressor (156 aa).

The protein belongs to the ArgR family.

Its subcellular location is the cytoplasm. It participates in amino-acid biosynthesis; L-arginine biosynthesis [regulation]. In terms of biological role, regulates arginine biosynthesis genes. This Photorhabdus laumondii subsp. laumondii (strain DSM 15139 / CIP 105565 / TT01) (Photorhabdus luminescens subsp. laumondii) protein is Arginine repressor.